A 278-amino-acid chain; its full sequence is HTH-type transcriptional activator RhaS (278 aa).

The HTH araC/xylS-type domain occupies 174–272; it reads NQLMAWLEDH…NWSPRDIRQG (99 aa). 2 consecutive DNA-binding regions (H-T-H motif) follow at residues 191–212 and 239–262; these read EAVAEQFSLSLRTLHRQLKQHT and VTEIAYRCGFGDSNHFSTLFRREF.

Binds DNA as a dimer.

The protein localises to the cytoplasm. Activates expression of the rhaBAD and rhaT operons. The polypeptide is HTH-type transcriptional activator RhaS (Salmonella dublin (strain CT_02021853)).